Reading from the N-terminus, the 642-residue chain is 1-deoxy-D-xylulose-5-phosphate synthase (642 aa).

Thiamine diphosphate is bound by residues His73 and Ser114 to Ala116. Asp145 contributes to the Mg(2+) binding site. Thiamine diphosphate is bound by residues Gly146–Ala147, Asn175, Phe286, and Glu367. Asn175 lines the Mg(2+) pocket.

It belongs to the transketolase family. DXPS subfamily. In terms of assembly, homodimer. It depends on Mg(2+) as a cofactor. Thiamine diphosphate is required as a cofactor.

The enzyme catalyses D-glyceraldehyde 3-phosphate + pyruvate + H(+) = 1-deoxy-D-xylulose 5-phosphate + CO2. It participates in metabolic intermediate biosynthesis; 1-deoxy-D-xylulose 5-phosphate biosynthesis; 1-deoxy-D-xylulose 5-phosphate from D-glyceraldehyde 3-phosphate and pyruvate: step 1/1. Catalyzes the acyloin condensation reaction between C atoms 2 and 3 of pyruvate and glyceraldehyde 3-phosphate to yield 1-deoxy-D-xylulose-5-phosphate (DXP). This chain is 1-deoxy-D-xylulose-5-phosphate synthase, found in Saccharopolyspora erythraea (strain ATCC 11635 / DSM 40517 / JCM 4748 / NBRC 13426 / NCIMB 8594 / NRRL 2338).